A 153-amino-acid polypeptide reads, in one-letter code: Ribosome maturation factor RimP (153 aa).

This sequence belongs to the RimP family.

Its subcellular location is the cytoplasm. In terms of biological role, required for maturation of 30S ribosomal subunits. The chain is Ribosome maturation factor RimP from Clostridium botulinum (strain Langeland / NCTC 10281 / Type F).